Consider the following 498-residue polypeptide: Envelop protein OPG153 (498 aa).

Cysteine 43 and cysteine 342 are disulfide-bonded. The segment at alanine 352–phenylalanine 391 is disordered. Positions threonine 355–aspartate 367 are enriched in basic and acidic residues. Residues lysine 378–proline 390 show a composition bias toward pro residues.

The protein belongs to the orthopoxvirus OPG153 protein family. Interacts with proteins OPG094 and OPG143. Interacts with OPG154. Interacts with OPG152. Interacts with host laminin.

The protein localises to the virion membrane. Its function is as follows. Envelop protein that mediates acid-dependent endocytosis into host cells. Plays an important role in endocytic entry of the virus by acting as an acid-sensitive membrane fusion suppressor. Low pH in host endosomes triggers conformational changes to allow de-repression of viral fusion complex activity and membrane fusion within vesicles. Also plays a role in bridging the mature virion with structural protein OPG152. The sequence is that of Envelop protein OPG153 (Protein OPG153) from Variola virus (isolate Human/India/Ind3/1967) (VARV).